The sequence spans 292 residues: NAD-dependent protein deacetylase sir-2.4 (292 aa).

A Deacetylase sirtuin-type domain is found at 31–292 (IEKLRTLYNH…DEVPIPLKIS (262 aa)). NAD(+) is bound by residues 56-75 (GAGVSTGSKLPDFRGKQGVW) and 116-119 (QNVD). The active-site Proton acceptor is histidine 136. 4 residues coordinate Zn(2+): cysteine 144, cysteine 147, cysteine 163, and cysteine 169. Residues 216–218 (GTS), 242–244 (NYQ), and valine 260 contribute to the NAD(+) site.

It belongs to the sirtuin family. Class IV subfamily. Zn(2+) serves as cofactor.

The enzyme catalyses N(6)-acetyl-L-lysyl-[protein] + NAD(+) + H2O = 2''-O-acetyl-ADP-D-ribose + nicotinamide + L-lysyl-[protein]. Its function is as follows. NAD-dependent protein deacetylase. In Caenorhabditis elegans, this protein is NAD-dependent protein deacetylase sir-2.4 (sir-2.4).